A 161-amino-acid chain; its full sequence is Ribosome maturation factor RimP (161 aa).

It belongs to the RimP family.

It localises to the cytoplasm. Its function is as follows. Required for maturation of 30S ribosomal subunits. The sequence is that of Ribosome maturation factor RimP from Rickettsia typhi (strain ATCC VR-144 / Wilmington).